Here is a 409-residue protein sequence, read N- to C-terminus: MASQDGTTELLSQSVNSTCIPGSTYHVDRGRASSASTPPTSPPLSEVDYTPLLESTQEPRHEYTQLAHSLVKAMADYVGHLQEENLPMPSLEPAAQVHGGLKVQGGVAARDTVVKLAQKIVAMTMDPEMKLFISSLQFHFCSSLKVAIDLRVHELDECFRASSRQADALALARYREPHEADTLGFGLAFNTTANFWEVLARDTEGKRSQRFNRAMRAVNINALEVIPRIYPFNRIGGNGLLVDVGGGLGQVARAIMATNQGSRLQRCIVQDVCAADDVLEEVLESNRKLGVELQRHDFFDKQPVTGASIYFFRHIFHDWPDRACVKILKQIVQAMGRDSRLLICDQVVDDEPSIPATLYDIDMWTLFGGKERNRSEWEALFRAADERLYIKKVWTTTEAPTTILEVCLW.

Polar residues predominate over residues 1-21 (MASQDGTTELLSQSVNSTCIP). The tract at residues 1–46 (MASQDGTTELLSQSVNSTCIPGSTYHVDRGRASSASTPPTSPPLSE) is disordered. D271 contributes to the S-adenosyl-L-methionine binding site. The active-site Proton acceptor is H317.

Belongs to the class I-like SAM-binding methyltransferase superfamily. Cation-independent O-methyltransferase family.

It participates in mycotoxin biosynthesis. Functionally, O-methyltransferase; part of the gene cluster that mediates the biosynthesis of the mycotoxin pyrichalasin H, a tyrosine-derived cytochalasan that inhibits the growth of rice seedlings, but also inhibits lymphocyte capping and actin polymerization and alters cell morphology. Pyrichalasin H is indicated as the responsible agent for the genus-specific pathogenicity of M.grisea toward crabgrass. The first step in the pathway is catalyzed by the O-methyltransferase pyiA which methylates free tyrosine to generate the precursor O-methyltyrosine. The hybrid PKS-NRPS pyiS, assisted by the enoyl reductase pyiC, are responsible for fusion of the O-methyltyrosine precursor and the polyketide backbone. The polyketide synthase module (PKS) of pyiS is responsible for the synthesis of the polyketide backbone and the downstream nonribosomal peptide synthetase (NRPS) amidates the carboxyl end of the polyketide with the O-methyltyrosine precursor. As the NRPS A-domain demonstrates substrate tolerance, pyiS can also use phenylalanine, tyrosine and even para-chlorophenylalanine as amino acid precursor, which leads to the production of novel cytochalasans, including halogenated cytochalasans. Because pyiS lacks a designated enoylreductase (ER) domain, the required activity is provided the enoyl reductase pyiC. Reduction by the hydrolyase pyiE leads to 1,5-dihydropyrrolone, which is substrate for dehydration and intra-molecular Diels-Alder cyclization by the Diels-Alderase pyiF to yield the required isoindolone-fused macrocycle. The tailoring cytochrome P450 monooxygenases piyD and piyG catalyze the hydroxylation at C-18 and C-7, respectivily, whereas the short-chain dehydrogenase/reductase pyiH reduces the carbonyl at C-21 in preparation for the transfer of an acetyl group by the acetyltransferase pyiB. These 3 reactions whose order is not clear yet, lead to the production of O-methylpyrichalasin J, a deacetylated pyrichalasin H. Finally, pyiB to converts O-methylpyrichalasin J into the final product pyrichalasin H via acetylation of C-21. The protein is O-methyltransferase pyiA of Pyricularia grisea (Crabgrass-specific blast fungus).